The following is an 80-amino-acid chain: Defensin-like protein 204 (80 aa).

An N-terminal signal peptide occupies residues 1–29; that stretch reads MAKTFSSICFTTLLLVVLFISTEIPKSEA. Disulfide bonds link Cys43/Cys64, Cys48/Cys73, and Cys52/Cys75.

This sequence belongs to the DEFL family.

It is found in the secreted. The protein is Defensin-like protein 204 of Arabidopsis thaliana (Mouse-ear cress).